We begin with the raw amino-acid sequence, 77 residues long: Large ribosomal subunit protein bL28 (77 aa).

Positions 1-25 (MARVCQVTGKAPMSGNNVSHANNKT) are disordered.

This sequence belongs to the bacterial ribosomal protein bL28 family.

This Paraburkholderia phymatum (strain DSM 17167 / CIP 108236 / LMG 21445 / STM815) (Burkholderia phymatum) protein is Large ribosomal subunit protein bL28.